We begin with the raw amino-acid sequence, 1101 residues long: Rho GTPase-activating protein 30 (1101 aa).

The Rho-GAP domain occupies 20 to 215 (CDLQEHLQHS…FILTHVDQLF (196 aa)). Disordered regions lie at residues 224 to 243 (EVES…SPED), 300 to 400 (HETK…RAGG), and 451 to 529 (ALQH…AEDG). Residues 308-318 (RGAEDREDKSN) show a composition bias toward basic and acidic residues. The span at 360-376 (LENDSIEAAEGEQEPEA) shows a compositional bias: acidic residues. Over residues 459–472 (ASGPGPGPGLGPGP) the composition is skewed to pro residues. Over residues 508–520 (DSFSFLEDSSSSE) the composition is skewed to low complexity. Serine 576 bears the Phosphoserine mark. 2 disordered regions span residues 621–906 (GPKP…QPSP) and 965–991 (CPRP…SWRN). 4 stretches are compositionally biased toward basic and acidic residues: residues 658–694 (GEDK…DRGE), 701–735 (TKVR…KGVE), 759–770 (EEAQVEAGRDLE), and 779–822 (AEEK…DSRS). Residues 976–991 (GERAWGSRASRSSWRN) show a composition bias toward low complexity. A Phosphoserine modification is found at serine 996. The tract at residues 1050 to 1101 (LELPSEGAEGSGSRSRLSLPPREPQVPDPLLSSQRRSYAFETQANPGKGEGL) is disordered. Positions 1053-1069 (PSEGAEGSGSRSRLSLP) are enriched in low complexity. The segment covering 1080–1094 (LSSQRRSYAFETQAN) has biased composition (polar residues).

In terms of assembly, interacts with RHOU in a GTP-independent manner.

The protein resides in the cytoplasmic vesicle. Functionally, GTPase-activating protein (GAP) for RAC1 and RHOA, but not for CDC42. This Homo sapiens (Human) protein is Rho GTPase-activating protein 30 (ARHGAP30).